Here is an 83-residue protein sequence, read N- to C-terminus: MALKTWLLCLLLLSLVLPGASSRAHQHSMETRTPDINPAWYTGRGIRPVGRFGRRRATPRDVTGLGQLSCLPLDGRTKFSQRG.

The signal sequence occupies residues 1–21 (MALKTWLLCLLLLSLVLPGAS). F52 carries the phenylalanine amide modification. The propeptide occupies 57-83 (ATPRDVTGLGQLSCLPLDGRTKFSQRG).

Widely expressed, with highest levels in medulla oblongata and hypothalamus.

It is found in the secreted. Functionally, stimulates prolactin (PRL) release and regulates the expression of prolactin through its receptor GPR10. May stimulate lactotrophs directly to secrete PRL. The chain is Prolactin-releasing peptide (Prlh) from Rattus norvegicus (Rat).